A 204-amino-acid chain; its full sequence is Recombination protein RecR (204 aa).

The C4-type zinc finger occupies 58–75 (CSVCQNVTDREEDPCSIC). One can recognise a Toprim domain in the interval 83–181 (TVICVVESPV…EVTKIARGIP (99 aa)).

It belongs to the RecR family.

In terms of biological role, may play a role in DNA repair. It seems to be involved in an RecBC-independent recombinational process of DNA repair. It may act with RecF and RecO. The protein is Recombination protein RecR of Chlorobium luteolum (strain DSM 273 / BCRC 81028 / 2530) (Pelodictyon luteolum).